The following is a 642-amino-acid chain: Threonine--tRNA ligase (642 aa).

Positions 1 to 61 (MPVITLPDGS…ENDAQLSIIT (61 aa)) constitute a TGS domain. Positions 243–534 (DHRKIGKQLD…LTEEFAGFFP (292 aa)) are catalytic. Lysine 286 carries the post-translational modification N6-acetyllysine. Zn(2+) is bound by residues cysteine 334, histidine 385, and histidine 511.

Belongs to the class-II aminoacyl-tRNA synthetase family. As to quaternary structure, homodimer. Requires Zn(2+) as cofactor.

It localises to the cytoplasm. The catalysed reaction is tRNA(Thr) + L-threonine + ATP = L-threonyl-tRNA(Thr) + AMP + diphosphate + H(+). Its function is as follows. Catalyzes the attachment of threonine to tRNA(Thr) in a two-step reaction: L-threonine is first activated by ATP to form Thr-AMP and then transferred to the acceptor end of tRNA(Thr). Also edits incorrectly charged L-seryl-tRNA(Thr). This Escherichia coli O157:H7 protein is Threonine--tRNA ligase.